Here is a 143-residue protein sequence, read N- to C-terminus: Transcription antitermination protein NusB (143 aa).

Belongs to the NusB family.

Its function is as follows. Involved in transcription antitermination. Required for transcription of ribosomal RNA (rRNA) genes. Binds specifically to the boxA antiterminator sequence of the ribosomal RNA (rrn) operons. The polypeptide is Transcription antitermination protein NusB (Desulforamulus reducens (strain ATCC BAA-1160 / DSM 100696 / MI-1) (Desulfotomaculum reducens)).